Here is a 541-residue protein sequence, read N- to C-terminus: Lysosomal cobalamin transport escort protein LMBD1 (541 aa).

The Extracellular segment spans residues 1–11 (MATPVALLSES). Residues 12–31 (VLGWSIFTVVLLVILAFCWV) form a helical membrane-spanning segment. Residues 32–50 (YIRKYQSRQESEVISTITA) lie on the Cytoplasmic side of the membrane. The helical transmembrane segment at 51–71 (ICALAIALITSALLPVDIFLV) threads the bilayer. Residues 72 to 101 (SFMKHPNGTYKEWAANNETRVQIEDTVLYG) lie on the Extracellular side of the membrane. N-linked (GlcNAc...) asparagine glycans are attached at residues Asn-78 and Asn-88. The helical transmembrane segment at 102–122 (YYTLYSIILFCVFLWIPFVYF) threads the bilayer. Over 123 to 145 (YYEEKDEDNNNKCLQVKNALKYT) the chain is Cytoplasmic. A helical membrane pass occupies residues 146-166 (IGFVIVCSALLLIGTFVPLAS). Residues 167 to 189 (PPNQNSTQWQKVQYLFEELGSSH) are Extracellular-facing. An N-linked (GlcNAc...) asparagine glycan is attached at Asn-171. Residues 190–210 (GLAALSFSISSLTLIGMLAVI) form a helical membrane-spanning segment. The Cytoplasmic portion of the chain corresponds to 211–306 (TYTAYGMSVL…KVGSALRPMK (96 aa)). Residues 307 to 327 (ILLGVFFILVALLFFVTLFIS) form a helical membrane-spanning segment. The Extracellular segment spans residues 328-365 (NLDKALHSAGISTGFIIFGTNLTNPLNELLLALQPVFP). N-linked (GlcNAc...) asparagine glycosylation is present at Asn-348. A helical membrane pass occupies residues 366-386 (LDYVLITVITMYFVFTSMAGI). Over 387 to 409 (RNMGIWFFWIRLYKIRPQRTRPQ) the chain is Cytoplasmic. A helical membrane pass occupies residues 410 to 430 (ALLFLCMILLLIVLHTSYMIY). The Extracellular segment spans residues 431–488 (SLAPQYVMYGSQKYLLQTPLPTAVPSQSNRSATITKICDADAPEDQCTVTRSYLFLHK). Asn-459 is a glycosylation site (N-linked (GlcNAc...) asparagine). A helical membrane pass occupies residues 489 to 509 (FWFFSTIYYFGNWAFLGVFLI). Over 510–541 (GLVVSCCKGKKSVIEGEVDADDSDFSDDEYVH) the chain is Cytoplasmic.

Belongs to the LIMR family. LMBRD1 subfamily.

It localises to the endoplasmic reticulum membrane. Its subcellular location is the lysosome membrane. The protein resides in the cell membrane. Its function is as follows. Lysosomal membrane chaperone required to export cobalamin (vitamin B12) from the lysosome to the cytosol, allowing its conversion to cofactors. Targets ABCD4 transporter from the endoplasmic reticulum to the lysosome. Then forms a complex with lysosomal ABCD4 and cytoplasmic MMACHC to transport cobalamin across the lysosomal membrane. May play a role in mediating and regulating the internalization of the insulin receptor. This chain is Lysosomal cobalamin transport escort protein LMBD1 (lmbrd1), found in Danio rerio (Zebrafish).